The sequence spans 670 residues: Segment polarity protein dishevelled homolog DVL-1 (670 aa).

A DIX domain is found at M1 to E85. The disordered stretch occupies residues S89–F237. Positions S142 to R151 are enriched in basic residues. Positions N152 to V171 are enriched in basic and acidic residues. Residues D176–V192 are compositionally biased toward low complexity. Phosphoserine is present on S194. Residues T200–R214 show a composition bias toward low complexity. Basic residues predominate over residues L215–L228. A PDZ domain is found at T251–E323. One can recognise a DEP domain in the interval P400 to D474. The segment at P518 to A642 is disordered. Low complexity predominate over residues P526–R555. The span at S600–A611 shows a compositional bias: polar residues.

It belongs to the DSH family. As to quaternary structure, interacts with CXXC4. Interacts (via PDZ domain) with NXN. Interacts with BRD7 and INVS. Interacts (via PDZ domain) with VANGL1 and VANGL2 (via C-terminus). Interacts with ARRB1; the interaction is enhanced by phosphorylation of DVL1. Interacts with CYLD. Interacts (via PDZ domain) with RYK. Self-associates (via DIX domain) and forms higher homooligomers. Interacts (via PDZ domain) with DACT1 and FZD7, where DACT1 and FZD7 compete for the same binding site. Interacts (via DEP domain) with MUSK; the interaction is direct and mediates the formation a DVL1, MUSK and PAK1 ternary complex involved in AChR clustering. Interacts (via PDZ domain) with TMEM88. Interacts with DCDC2. Interacts with FOXK2. Interacts with PKD1 (via extracellular domain). Interacts (via PDZ domain) with CCDC88C/DAPLE; competes with CCDC88C for binding to frizzled receptor FZD7 and dissociates from CCDC88C following initiation of non-canonical Wnt signaling when CCDC88C displaces DVL1 from ligand-activated FZD7. In terms of processing, ubiquitinated; undergoes both 'Lys-48'-linked ubiquitination, leading to its subsequent degradation by the ubiquitin-proteasome pathway, and 'Lys-63'-linked ubiquitination. The interaction with INVS is required for ubiquitination. Deubiquitinated by CYLD, which acts on 'Lys-63'-linked ubiquitin chains.

It localises to the cell membrane. The protein localises to the cytoplasm. Its subcellular location is the cytosol. The protein resides in the cytoplasmic vesicle. Functionally, participates in Wnt signaling by binding to the cytoplasmic C-terminus of frizzled family members and transducing the Wnt signal to down-stream effectors. Plays a role both in canonical and non-canonical Wnt signaling. Plays a role in the signal transduction pathways mediated by multiple Wnt genes. Required for LEF1 activation upon WNT1 and WNT3A signaling. DVL1 and PAK1 form a ternary complex with MUSK which is important for MUSK-dependent regulation of AChR clustering during the formation of the neuromuscular junction (NMJ). This chain is Segment polarity protein dishevelled homolog DVL-1 (DVL1), found in Pan troglodytes (Chimpanzee).